A 165-amino-acid chain; its full sequence is Nucleotide-binding protein Suden_0039 (165 aa).

This sequence belongs to the YajQ family.

Its function is as follows. Nucleotide-binding protein. This is Nucleotide-binding protein Suden_0039 from Sulfurimonas denitrificans (strain ATCC 33889 / DSM 1251) (Thiomicrospira denitrificans (strain ATCC 33889 / DSM 1251)).